Reading from the N-terminus, the 570-residue chain is MRASELFSPTLREVPAEAEVVSHQLLLRAGFIRRAAAGVYTYLPLAMRVIKKIEQIVREEMDRQGGQELLMPIIQPAEIWQESGRWDVYGPELFRLKDRHDRDFALGPTHEEIITVLVRGEVSSYKQLPLLLYQIQNKYRDERRPRFGLMRGREFIMKDLYSFDRDEEGLNVSYMKMYEAYTRVFQRCGLHFRPVEADSGAIGGSDTHEFMVLAESGEATVLYCDGNGCDYAANVEKAALPFKERRTEEEMRPVAARETPGCRSVEEVCGFLGVPARKIIKTLIYRTEKEVLAALVRGDRDVNEVKLLNASGALRLELAGADTVKSITGASVGYAGPVGLKGVRIIADPEAAAAVNAVTGANRDDTHLINVNPGRDFKIDLVADIRMVQAGEPCPRCGAGLKEAKGIEVGQIFKLGDKYSRALGASYLDEKGQSRPVIMGCYGIGITRTMAAAIEQNHDRDGIIWPASIAPFHVVVIPVNVKDGGQYAMAEEVYSRLWAAGIEAVLDDRTERAGVKFKDADLIGYPLRITIGAKAVEEKLVEIRIRKNGETVFVPMNELEEKVEDMLKEL.

The protein belongs to the class-II aminoacyl-tRNA synthetase family. ProS type 1 subfamily. As to quaternary structure, homodimer.

It localises to the cytoplasm. It catalyses the reaction tRNA(Pro) + L-proline + ATP = L-prolyl-tRNA(Pro) + AMP + diphosphate. Catalyzes the attachment of proline to tRNA(Pro) in a two-step reaction: proline is first activated by ATP to form Pro-AMP and then transferred to the acceptor end of tRNA(Pro). As ProRS can inadvertently accommodate and process non-cognate amino acids such as alanine and cysteine, to avoid such errors it has two additional distinct editing activities against alanine. One activity is designated as 'pretransfer' editing and involves the tRNA(Pro)-independent hydrolysis of activated Ala-AMP. The other activity is designated 'posttransfer' editing and involves deacylation of mischarged Ala-tRNA(Pro). The misacylated Cys-tRNA(Pro) is not edited by ProRS. The protein is Proline--tRNA ligase of Pelotomaculum thermopropionicum (strain DSM 13744 / JCM 10971 / SI).